The chain runs to 415 residues: 1-deoxy-D-xylulose 5-phosphate reductoisomerase (415 aa).

NADPH is bound by residues threonine 10, glycine 11, serine 12, isoleucine 13, glycine 36, arginine 37, asparagine 38, and asparagine 128. A 1-deoxy-D-xylulose 5-phosphate-binding site is contributed by lysine 129. Residue glutamate 130 coordinates NADPH. A Mn(2+)-binding site is contributed by aspartate 154. 1-deoxy-D-xylulose 5-phosphate-binding residues include serine 155, glutamate 156, serine 192, and histidine 215. Residue glutamate 156 coordinates Mn(2+). Glycine 221 is an NADPH binding site. Positions 228, 233, 234, and 237 each coordinate 1-deoxy-D-xylulose 5-phosphate. Glutamate 237 provides a ligand contact to Mn(2+).

This sequence belongs to the DXR family. Mg(2+) is required as a cofactor. Requires Mn(2+) as cofactor.

The enzyme catalyses 2-C-methyl-D-erythritol 4-phosphate + NADP(+) = 1-deoxy-D-xylulose 5-phosphate + NADPH + H(+). It participates in isoprenoid biosynthesis; isopentenyl diphosphate biosynthesis via DXP pathway; isopentenyl diphosphate from 1-deoxy-D-xylulose 5-phosphate: step 1/6. Functionally, catalyzes the NADPH-dependent rearrangement and reduction of 1-deoxy-D-xylulose-5-phosphate (DXP) to 2-C-methyl-D-erythritol 4-phosphate (MEP). This Synechococcus sp. (strain CC9605) protein is 1-deoxy-D-xylulose 5-phosphate reductoisomerase.